The chain runs to 341 residues: MKEVAIIGATGYTGAELLRLLANHEKVNVTYITSRKEAGKHVFKVHPHLKGIEKYKNLCFTGDIDKVDAYLVFTATPHGASMDIVPDFIERGMKVIDLSGDYRFEDLSLYEKYYKIKHKGLPDVKIAYGLPELHREEIKEAQLVANPGCFPTGAILAVAPLVKENIIEERIIFDSKTGVSGAGIKPTETTHFPNVNENINPYKITTHRHTPEIEKELKKLGKAKVSFTPHLAPITRGILTTAHTFLAKDVDREEIIKIYEKFYGSEVFVRIFSEEIPKLTWVRGTNFCDIGGFEIDEHGRLVVISAIDNLVKGASGQAIQNMNIMFGFDEKEGLFDVGLNP.

Residue C149 is part of the active site.

The protein belongs to the NAGSA dehydrogenase family. Type 1 subfamily.

The protein resides in the cytoplasm. The enzyme catalyses N-acetyl-L-glutamate 5-semialdehyde + phosphate + NADP(+) = N-acetyl-L-glutamyl 5-phosphate + NADPH + H(+). It participates in amino-acid biosynthesis; L-arginine biosynthesis; N(2)-acetyl-L-ornithine from L-glutamate: step 3/4. Functionally, catalyzes the NADPH-dependent reduction of N-acetyl-5-glutamyl phosphate to yield N-acetyl-L-glutamate 5-semialdehyde. This Methanocaldococcus jannaschii (strain ATCC 43067 / DSM 2661 / JAL-1 / JCM 10045 / NBRC 100440) (Methanococcus jannaschii) protein is N-acetyl-gamma-glutamyl-phosphate reductase.